The primary structure comprises 133 residues: Ribosome-binding factor A (133 aa).

Belongs to the RbfA family. As to quaternary structure, monomer. Binds 30S ribosomal subunits, but not 50S ribosomal subunits or 70S ribosomes.

The protein localises to the cytoplasm. In terms of biological role, one of several proteins that assist in the late maturation steps of the functional core of the 30S ribosomal subunit. Associates with free 30S ribosomal subunits (but not with 30S subunits that are part of 70S ribosomes or polysomes). Required for efficient processing of 16S rRNA. May interact with the 5'-terminal helix region of 16S rRNA. In Bordetella pertussis (strain Tohama I / ATCC BAA-589 / NCTC 13251), this protein is Ribosome-binding factor A.